The primary structure comprises 499 residues: Bifunctional purine biosynthesis protein PurH (499 aa).

Positions 1-144 constitute an MGS-like domain; sequence MIKRALISVF…KNFKDVVVLT (144 aa).

Belongs to the PurH family.

It catalyses the reaction (6R)-10-formyltetrahydrofolate + 5-amino-1-(5-phospho-beta-D-ribosyl)imidazole-4-carboxamide = 5-formamido-1-(5-phospho-D-ribosyl)imidazole-4-carboxamide + (6S)-5,6,7,8-tetrahydrofolate. It carries out the reaction IMP + H2O = 5-formamido-1-(5-phospho-D-ribosyl)imidazole-4-carboxamide. Its pathway is purine metabolism; IMP biosynthesis via de novo pathway; 5-formamido-1-(5-phospho-D-ribosyl)imidazole-4-carboxamide from 5-amino-1-(5-phospho-D-ribosyl)imidazole-4-carboxamide (10-formyl THF route): step 1/1. It functions in the pathway purine metabolism; IMP biosynthesis via de novo pathway; IMP from 5-formamido-1-(5-phospho-D-ribosyl)imidazole-4-carboxamide: step 1/1. This is Bifunctional purine biosynthesis protein PurH from Clostridium botulinum (strain Kyoto / Type A2).